A 589-amino-acid polypeptide reads, in one-letter code: EZH inhibitory protein (589 aa).

Disordered regions lie at residues 1–46, 61–548, and 561–589; these read MASS…LRLR, AGED…SGPN, and LDSS…KCRG. Composition is skewed to gly residues over residues 29–38 and 105–114; these read GPRGRGGPSG and PKGGGKADQG. Positions 147–161 are enriched in low complexity; the sequence is GAAGPPLPGARGSPA. The segment covering 193–204 has biased composition (polar residues); sequence LRSSTSQGSGST. Low complexity-rich tracts occupy residues 299–308, 325–334, 351–360, and 374–390; these read RSSASAVSPE, RSSASVVSPE, and PRAT…TTRS. A Phosphoserine modification is found at Ser306. Over residues 426–437 the composition is skewed to basic and acidic residues; the sequence is MRLDLQVDREPE. Over residues 438–449 the composition is skewed to acidic residues; it reads SEAEQEEQELES. Low complexity predominate over residues 450–465; it reads EPGPSSRPQASRSSSR. The tract at residues 482–490 is sufficient for interaction with EZH2; it reads RRPVRMRAS. The interval 484-503 is necessary and sufficient for inhibition of PRC2/EED-EZH1 and PRC2/EED-EZH2 complex activity; it reads PVRMRASSPSPPGRLYPLPK. Over residues 509–547 the composition is skewed to low complexity; sequence VHSPSSSSSESSSVSSSHSPLNKAPDPGSSPPLSSLSGP. Residues 575–589 show a composition bias toward basic and acidic residues; the sequence is AAPHTREEEDKKCRG.

In terms of assembly, interacts with PRC2/EED-EZH1 complex member EZH1 and with PRC2/EED-EZH2 complex member EZH2; the interaction blocks EZH1/EZH2 methyltransferase activity. Interacts (via C-terminus) with SUZ12 which is a member of the PRC2/EED-EZH1 and PRC2/EED-EZH2 complexes. In terms of tissue distribution, highly expressed in ovary with lower expression in testis and very low levels in other tissues tested including prostate, brain, kidney, spleen and liver. During spermatogenesis, expressed mainly in spermatogonia with very low expression in spermatocytes I and II.

It localises to the nucleus. The protein localises to the cytoplasm. Its function is as follows. Inhibits PRC2/EED-EZH1 and PRC2/EED-EZH2 complex function by inhibiting EZH1/EZH2 methyltransferase activity, thereby causing down-regulation of histone H3 trimethylation at 'Lys-27' (H3K27me3). Probably inhibits methyltransferase activity by limiting the stimulatory effect of cofactors such as AEBP2 and JARID2. Inhibits H3K27me3 deposition during spermatogenesis and oogenesis. This chain is EZH inhibitory protein, found in Mus musculus (Mouse).